The primary structure comprises 179 residues: Dual-action ribosomal maturation protein DarP (179 aa).

Belongs to the DarP family.

It localises to the cytoplasm. In terms of biological role, member of a network of 50S ribosomal subunit biogenesis factors which assembles along the 30S-50S interface, preventing incorrect 23S rRNA structures from forming. Promotes peptidyl transferase center (PTC) maturation. The polypeptide is Dual-action ribosomal maturation protein DarP (Aliivibrio fischeri (strain ATCC 700601 / ES114) (Vibrio fischeri)).